The sequence spans 703 residues: Ion-translocating oxidoreductase complex subunit C (703 aa).

2 4Fe-4S ferredoxin-type domains span residues 369-398 and 408-437; these read YDPQ…QQMY and KSNQ…IQYF. Positions 378, 381, 384, 388, 417, 420, 423, and 427 each coordinate [4Fe-4S] cluster. Disordered stretches follow at residues 467–542 and 555–680; these read RLER…PDNS and RQQT…PKKA. A compositionally biased stretch (basic and acidic residues) spans 485 to 497; it reads ARREELAANKGED. The segment covering 559-577 has biased composition (low complexity); the sequence is NGNSPVSSASNSDSATISA. Over residues 578-592 the composition is skewed to polar residues; the sequence is DNTHSTPKTAQNQTA. Composition is skewed to low complexity over residues 598-629 and 641-669; these read AAVA…TEKT and AAVA…EKTA.

The protein belongs to the 4Fe4S bacterial-type ferredoxin family. RnfC subfamily. As to quaternary structure, the complex is composed of six subunits: RnfA, RnfB, RnfC, RnfD, RnfE and RnfG. [4Fe-4S] cluster is required as a cofactor.

The protein localises to the cell inner membrane. In terms of biological role, part of a membrane-bound complex that couples electron transfer with translocation of ions across the membrane. The polypeptide is Ion-translocating oxidoreductase complex subunit C (Actinobacillus succinogenes (strain ATCC 55618 / DSM 22257 / CCUG 43843 / 130Z)).